We begin with the raw amino-acid sequence, 160 residues long: MSLATLDTAQHPSLPSASETLFKAKAAKKLSFEQIAQHIGRNEVATAAIFYGQAKASPEDIEKLSGLLTIPYDALEERLSGFPDRGRSVEMPPKEPLIYRLYEIVQNYGYAYKAVLNEKFGDGIMSAISFSTKVEKETDADGNNWAVITLRGKWLPFSRF.

Catalysis depends on residues R100, E103, and S126.

Belongs to the cyanase family.

The enzyme catalyses cyanate + hydrogencarbonate + 3 H(+) = NH4(+) + 2 CO2. In terms of biological role, catalyzes the reaction of cyanate with bicarbonate to produce ammonia and carbon dioxide. This chain is Cyanate hydratase, found in Aspergillus niger (strain ATCC MYA-4892 / CBS 513.88 / FGSC A1513).